Here is a 292-residue protein sequence, read N- to C-terminus: Probable alpha-L-glutamate ligase (292 aa).

Positions 104–287 constitute an ATP-grasp domain; the sequence is HQLLAAKGID…VATRIIEHVE (184 aa). ATP is bound by residues Lys141, 178–179, Asp187, and 211–213; these read EF and RSN. Mg(2+)-binding residues include Asp248, Glu260, and Asn262. 3 residues coordinate Mn(2+): Asp248, Glu260, and Asn262.

It belongs to the RimK family. It depends on Mg(2+) as a cofactor. Mn(2+) is required as a cofactor.

The polypeptide is Probable alpha-L-glutamate ligase (Stenotrophomonas maltophilia (strain K279a)).